Here is a 216-residue protein sequence, read N- to C-terminus: Adenylate kinase (216 aa).

An ATP-binding site is contributed by 10–15 (GAGKGT). Positions 30–59 (STGDMFRAAMKAETEMGLQAKSFIDKGALV) are NMP. AMP-binding positions include Thr31, Arg36, 57–59 (ALV), 85–88 (GFPR), and Gln92. The LID stretch occupies residues 126 to 163 (GRRICKECGATYHLEFNPPAKADVCDKCGGELYQRSDD). Arg127 is an ATP binding site. 2 residues coordinate Zn(2+): Cys130 and Cys133. ATP is bound at residue 136–137 (TY). The Zn(2+) site is built by Cys150 and Cys153. Residues Arg160 and Arg171 each coordinate AMP. Gln199 serves as a coordination point for ATP.

This sequence belongs to the adenylate kinase family. Monomer.

The protein localises to the cytoplasm. It carries out the reaction AMP + ATP = 2 ADP. The protein operates within purine metabolism; AMP biosynthesis via salvage pathway; AMP from ADP: step 1/1. Functionally, catalyzes the reversible transfer of the terminal phosphate group between ATP and AMP. Plays an important role in cellular energy homeostasis and in adenine nucleotide metabolism. This is Adenylate kinase from Bacillus cereus (strain G9842).